The primary structure comprises 101 residues: Protein Tat (101 aa).

The interval 1–24 (MDPVDPNLEPWNHPGSQPKTPCNK) is interaction with human CREBBP. Positions 1–48 (MDPVDPNLEPWNHPGSQPKTPCNKCFCKVCCWHCQVCFLNKGLGISYG) are transactivation. Zn(2+) is bound by residues C22, C25, and C27. Residues 22 to 37 (CNKCFCKVCCWHCQVC) are cysteine-rich. The residue at position 28 (K28) is an N6-acetyllysine; by host PCAF. Residues C30, H33, C34, and C37 each contribute to the Zn(2+) site. Residues 38–48 (FLNKGLGISYG) form a core region. Over residues 48–57 (GRKKRKHRRG) the composition is skewed to basic residues. Residues 48–101 (GRKKRKHRRGTPQSSKGHQDPVPKQPLPTTRGNPTGPKESKKEVASKAEADQCD) form a disordered region. Positions 49–57 (RKKRKHRRG) match the Nuclear localization signal, RNA-binding (TAR), and protein transduction motif. The interval 49–86 (RKKRKHRRGTPQSSKGHQDPVPKQPLPTTRGNPTGPKE) is interaction with the host capping enzyme RNGTT. K50 and K51 each carry N6-acetyllysine; by host EP300 and GCN5L2. Asymmetric dimethylarginine; by host PRMT6 is present on R52. Residue K71 forms a Glycyl lysine isopeptide (Lys-Gly) (interchain with G-Cter in ubiquitin) linkage. A compositionally biased stretch (basic and acidic residues) spans 85 to 101 (KESKKEVASKAEADQCD).

This sequence belongs to the lentiviruses Tat family. Interacts with host CCNT1. Associates with the P-TEFb complex composed at least of Tat, P-TEFb (CDK9 and CCNT1), TAR RNA, RNA Pol II. Recruits the HATs CREBBP, TAF1/TFIID, EP300, PCAF and GCN5L2. Interacts with host KAT5/Tip60; this interaction targets the latter to degradation. Interacts with the host deacetylase SIRT1. Interacts with host capping enzyme RNGTT; this interaction stimulates RNGTT. Binds to host KDR, and to the host integrins ITGAV/ITGB3 and ITGA5/ITGB1. Interacts with host KPNB1/importin beta-1 without previous binding to KPNA1/importin alpha-1. Interacts with EIF2AK2. Interacts with host nucleosome assembly protein NAP1L1; this interaction may be required for the transport of Tat within the nucleus, since the two proteins interact at the nuclear rim. Interacts with host C1QBP/SF2P32; this interaction involves lysine-acetylated Tat. Interacts with the host chemokine receptors CCR2, CCR3 and CXCR4. Interacts with host DPP4/CD26; this interaction may trigger an anti-proliferative effect. Interacts with host LDLR. Interacts with the host extracellular matrix metalloproteinase MMP1. Interacts with host PRMT6; this interaction mediates Tat's methylation. Interacts with, and is ubiquitinated by MDM2/Hdm2. Interacts with host PSMC3 and HTATIP2. Interacts with STAB1; this interaction may overcome SATB1-mediated repression of IL2 and IL2RA (interleukin) in T cells by binding to the same domain than HDAC1. Interacts (when acetylated) with human CDK13, thereby increasing HIV-1 mRNA splicing and promoting the production of the doubly spliced HIV-1 protein Nef. Interacts with host TBP; this interaction modulates the activity of transcriptional pre-initiation complex. Interacts with host RELA. Interacts with host PLSCR1; this interaction negatively regulates Tat transactivation activity by altering its subcellular distribution. Post-translationally, asymmetrical arginine methylation by host PRMT6 seems to diminish the transactivation capacity of Tat and affects the interaction with host CCNT1. In terms of processing, acetylation by EP300, CREBBP, GCN5L2/GCN5 and PCAF regulates the transactivation activity of Tat. EP300-mediated acetylation of Lys-50 promotes dissociation of Tat from the TAR RNA through the competitive binding to PCAF's bromodomain. In addition, the non-acetylated Tat's N-terminus can also interact with PCAF. PCAF-mediated acetylation of Lys-28 enhances Tat's binding to CCNT1. Lys-50 is deacetylated by SIRT1. Polyubiquitination by host MDM2 does not target Tat to degradation, but activates its transactivation function and fosters interaction with CCNT1 and TAR RNA. Post-translationally, phosphorylated by EIF2AK2 on serine and threonine residues adjacent to the basic region important for TAR RNA binding and function. Phosphorylation of Tat by EIF2AK2 is dependent on the prior activation of EIF2AK2 by dsRNA.

It is found in the host nucleus. It localises to the host nucleolus. The protein localises to the host cytoplasm. Its subcellular location is the secreted. In terms of biological role, transcriptional activator that increases RNA Pol II processivity, thereby increasing the level of full-length viral transcripts. Recognizes a hairpin structure at the 5'-LTR of the nascent viral mRNAs referred to as the transactivation responsive RNA element (TAR) and recruits the cyclin T1-CDK9 complex (P-TEFb complex) that will in turn hyperphosphorylate the RNA polymerase II to allow efficient elongation. The CDK9 component of P-TEFb and other Tat-activated kinases hyperphosphorylate the C-terminus of RNA Pol II that becomes stabilized and much more processive. Other factors such as HTATSF1/Tat-SF1, SUPT5H/SPT5, and HTATIP2 are also important for Tat's function. Besides its effect on RNA Pol II processivity, Tat induces chromatin remodeling of proviral genes by recruiting the histone acetyltransferases (HATs) CREBBP, EP300 and PCAF to the chromatin. This also contributes to the increase in proviral transcription rate, especially when the provirus integrates in transcriptionally silent region of the host genome. To ensure maximal activation of the LTR, Tat mediates nuclear translocation of NF-kappa-B by interacting with host RELA. Through its interaction with host TBP, Tat may also modulate transcription initiation. Tat can reactivate a latently infected cell by penetrating in it and transactivating its LTR promoter. In the cytoplasm, Tat is thought to act as a translational activator of HIV-1 mRNAs. Its function is as follows. Extracellular circulating Tat can be endocytosed by surrounding uninfected cells via the binding to several surface receptors such as CD26, CXCR4, heparan sulfate proteoglycans (HSPG) or LDLR. Neurons are rarely infected, but they internalize Tat via their LDLR. Through its interaction with nuclear HATs, Tat is potentially able to control the acetylation-dependent cellular gene expression. Modulates the expression of many cellular genes involved in cell survival, proliferation or in coding for cytokines or cytokine receptors. Tat plays a role in T-cell and neurons apoptosis. Tat induced neurotoxicity and apoptosis probably contribute to neuroAIDS. Circulating Tat also acts as a chemokine-like and/or growth factor-like molecule that binds to specific receptors on the surface of the cells, affecting many cellular pathways. In the vascular system, Tat binds to ITGAV/ITGB3 and ITGA5/ITGB1 integrins dimers at the surface of endothelial cells and competes with bFGF for heparin-binding sites, leading to an excess of soluble bFGF. The protein is Protein Tat of Homo sapiens (Human).